The following is a 90-amino-acid chain: Small ribosomal subunit protein uS15 (90 aa).

It belongs to the universal ribosomal protein uS15 family. As to quaternary structure, part of the 30S ribosomal subunit. Forms a bridge to the 50S subunit in the 70S ribosome, contacting the 23S rRNA.

Its function is as follows. One of the primary rRNA binding proteins, it binds directly to 16S rRNA where it helps nucleate assembly of the platform of the 30S subunit by binding and bridging several RNA helices of the 16S rRNA. In terms of biological role, forms an intersubunit bridge (bridge B4) with the 23S rRNA of the 50S subunit in the ribosome. In Wolbachia sp. subsp. Drosophila simulans (strain wRi), this protein is Small ribosomal subunit protein uS15.